The chain runs to 301 residues: Acetylglutamate kinase (301 aa).

Residues 71 to 72, R93, and N198 contribute to the substrate site; that span reads GG.

This sequence belongs to the acetylglutamate kinase family. ArgB subfamily.

It is found in the cytoplasm. It catalyses the reaction N-acetyl-L-glutamate + ATP = N-acetyl-L-glutamyl 5-phosphate + ADP. It participates in amino-acid biosynthesis; L-arginine biosynthesis; N(2)-acetyl-L-ornithine from L-glutamate: step 2/4. Functionally, catalyzes the ATP-dependent phosphorylation of N-acetyl-L-glutamate. The polypeptide is Acetylglutamate kinase (Zymomonas mobilis subsp. mobilis (strain ATCC 31821 / ZM4 / CP4)).